A 306-amino-acid polypeptide reads, in one-letter code: Uricase (306 aa).

Residues lysine 5 and threonine 65 each act as charge relay system in the active site. Positions 65, 66, 175, 192, 240, 241, and 267 each coordinate urate. Residues 281 to 306 (AKVLREPPRPTGYQQFSMDRSDLEEQ) are disordered.

It belongs to the uricase family.

It carries out the reaction urate + O2 + H2O = 5-hydroxyisourate + H2O2. Its pathway is purine metabolism; urate degradation; (S)-allantoin from urate: step 1/3. Functionally, catalyzes the oxidation of uric acid to 5-hydroxyisourate, which is further processed to form (S)-allantoin. This Halalkalicoccus jeotgali (strain DSM 18796 / CECT 7217 / JCM 14584 / KCTC 4019 / B3) protein is Uricase.